Consider the following 431-residue polypeptide: Enolase (431 aa).

Gln163 lines the (2R)-2-phosphoglycerate pocket. Glu205 (proton donor) is an active-site residue. Positions 242, 288, and 315 each coordinate Mg(2+). (2R)-2-phosphoglycerate is bound by residues Lys340, Arg369, Ser370, and Lys391. The active-site Proton acceptor is the Lys340.

Belongs to the enolase family. It depends on Mg(2+) as a cofactor.

It localises to the cytoplasm. The protein resides in the secreted. It is found in the cell surface. The catalysed reaction is (2R)-2-phosphoglycerate = phosphoenolpyruvate + H2O. The protein operates within carbohydrate degradation; glycolysis; pyruvate from D-glyceraldehyde 3-phosphate: step 4/5. Functionally, catalyzes the reversible conversion of 2-phosphoglycerate (2-PG) into phosphoenolpyruvate (PEP). It is essential for the degradation of carbohydrates via glycolysis. This chain is Enolase, found in Trichlorobacter lovleyi (strain ATCC BAA-1151 / DSM 17278 / SZ) (Geobacter lovleyi).